A 424-amino-acid chain; its full sequence is Serpin A11 (424 aa).

An N-terminal signal peptide occupies residues 1 to 21 (MGPVWLWLWLLVAEVLLPVHC). N-linked (GlcNAc...) asparagine glycosylation is found at Asn108, Asn171, Asn352, and Asn387.

Belongs to the serpin family.

Its subcellular location is the secreted. This is Serpin A11 (Serpina11) from Mus musculus (Mouse).